The chain runs to 186 residues: Peptidyl-tRNA hydrolase (186 aa).

Tyr-16 is a tRNA binding site. His-21 acts as the Proton acceptor in catalysis. The tRNA site is built by Tyr-60 and Asn-62.

It belongs to the PTH family. In terms of assembly, monomer.

It localises to the cytoplasm. It carries out the reaction an N-acyl-L-alpha-aminoacyl-tRNA + H2O = an N-acyl-L-amino acid + a tRNA + H(+). Hydrolyzes ribosome-free peptidyl-tRNAs (with 1 or more amino acids incorporated), which drop off the ribosome during protein synthesis, or as a result of ribosome stalling. In terms of biological role, catalyzes the release of premature peptidyl moieties from peptidyl-tRNA molecules trapped in stalled 50S ribosomal subunits, and thus maintains levels of free tRNAs and 50S ribosomes. The protein is Peptidyl-tRNA hydrolase of Tropheryma whipplei (strain Twist) (Whipple's bacillus).